The sequence spans 267 residues: 5'-methylthioadenosine nucleosidase (267 aa).

The active-site Proton acceptor is glutamate 38. S-methyl-5'-thioadenosine contacts are provided by residues threonine 116, 199-202 (KDME), and aspartate 225. The adenine site is built by lysine 199 and aspartate 225. Aspartate 225 serves as the catalytic Proton donor.

This sequence belongs to the PNP/UDP phosphorylase family. MtnN subfamily. Homodimer. Interacts with CBL3 in a calcium-dependent manner. As to expression, expressed in roots, leaves, stems, cauline leaves and flowers.

The catalysed reaction is S-methyl-5'-thioadenosine + H2O = 5-(methylsulfanyl)-D-ribose + adenine. It participates in amino-acid biosynthesis; L-methionine biosynthesis via salvage pathway; S-methyl-5-thio-alpha-D-ribose 1-phosphate from S-methyl-5'-thioadenosine (hydrolase route): step 1/2. Its activity is regulated as follows. Inhibited by CBL3 in a calcium-dependent manner. Inhibited by 5'-methylthiotubercidin (MTT) and by formycin A (FMA). Its function is as follows. Enzyme of the methionine cycle that catalyzes the irreversible cleavage of the glycosidic bond in 5'-methylthioadenosine (MTA) to adenine and 5'-methylthioribose. Contributes to the maintenance of AdoMet homeostasis and is required to sustain high rates of ethylene synthesis. Inactive towards S-adenosylhomocysteine (SAH/AdoHcy). The sequence is that of 5'-methylthioadenosine nucleosidase (MTN1) from Arabidopsis thaliana (Mouse-ear cress).